Consider the following 135-residue polypeptide: Lactoylglutathione lyase (135 aa).

Positions 2 to 126 (QILHTMLRVG…DGYKIEFIEN (125 aa)) constitute a VOC domain. Position 5 (H5) interacts with Ni(2+). Residue R9 coordinates substrate. A Ni(2+)-binding site is contributed by E56. Residues N60 and H74 each contribute to the substrate site. Ni(2+) contacts are provided by H74 and E122. Residue E122 is the Proton donor/acceptor of the active site.

The protein belongs to the glyoxalase I family. Homodimer. Ni(2+) is required as a cofactor.

The catalysed reaction is (R)-S-lactoylglutathione = methylglyoxal + glutathione. It participates in secondary metabolite metabolism; methylglyoxal degradation; (R)-lactate from methylglyoxal: step 1/2. Catalyzes the conversion of hemimercaptal, formed from methylglyoxal and glutathione, to S-lactoylglutathione. This Haemophilus influenzae (strain ATCC 51907 / DSM 11121 / KW20 / Rd) protein is Lactoylglutathione lyase (gloA).